A 345-amino-acid polypeptide reads, in one-letter code: MPIATPEIYAEMLRRAKENSYAFPAINCTSSETVNAAIKGFADAGSDGIIQFSTGGAEFASGLGVKDMVTGAVALAKFTHTIAAKYPINVALHTDHCPKDKLDSYVRPLLAISARRVATGKDPLFGSHMWDGSAIPIDENLAIAQDLLKDAAAAKIILEVEIGVVGGEEDGVAGEINEKLYTTPKDFVKTIDALGAGEHGKYLLAATFGNVHGVYKPGNVKLRPDILAEGQKVAAAKLSQSEGSKPFDFVFHGGSGSEKSEIEEALRYGVVKMNVDTDTQYAFTRPVSGHMFTNYDGVLKVDGDVGNKKVYDPRSYLKKAEASMTERVLEACNDLRCAGKSVAAS.

Serine 53 is a binding site for D-glyceraldehyde 3-phosphate. The active-site Proton donor is aspartate 95. The Zn(2+) site is built by histidine 96, aspartate 131, glutamate 161, and histidine 212. Residue glycine 213 coordinates dihydroxyacetone phosphate. Histidine 252 is a binding site for Zn(2+). Residues glycine 253 to serine 255 and asparagine 274 to threonine 277 contribute to the dihydroxyacetone phosphate site.

The protein belongs to the class II fructose-bisphosphate aldolase family. Zn(2+) serves as cofactor.

It catalyses the reaction beta-D-fructose 1,6-bisphosphate = D-glyceraldehyde 3-phosphate + dihydroxyacetone phosphate. Its pathway is carbohydrate degradation; glycolysis; D-glyceraldehyde 3-phosphate and glycerone phosphate from D-glucose: step 4/4. Its function is as follows. Catalyzes the aldol condensation of dihydroxyacetone phosphate (DHAP or glycerone-phosphate) with glyceraldehyde 3-phosphate (G3P) to form fructose 1,6-bisphosphate (FBP) in gluconeogenesis and the reverse reaction in glycolysis. This chain is Fructose-bisphosphate aldolase (fba), found in Mycobacterium leprae (strain TN).